The primary structure comprises 197 residues: Holliday junction branch migration complex subunit RuvA (197 aa).

The interval 1 to 63 (MYDYIKGNLT…EDAHLLYGFH (63 aa)) is domain I. The segment at 64 to 142 (TEDEKAVFLN…DINEVSTDKS (79 aa)) is domain II. Residues 143–147 (KVSTI) are flexible linker. The domain III stretch occupies residues 148 to 197 (NNNQELEEAVEALLALGYKTNELKKIEKFFEGTTDTAENYIKSALKMLMK).

This sequence belongs to the RuvA family. Homotetramer. Forms an RuvA(8)-RuvB(12)-Holliday junction (HJ) complex. HJ DNA is sandwiched between 2 RuvA tetramers; dsDNA enters through RuvA and exits via RuvB. An RuvB hexamer assembles on each DNA strand where it exits the tetramer. Each RuvB hexamer is contacted by two RuvA subunits (via domain III) on 2 adjacent RuvB subunits; this complex drives branch migration. In the full resolvosome a probable DNA-RuvA(4)-RuvB(12)-RuvC(2) complex forms which resolves the HJ.

Its subcellular location is the cytoplasm. Functionally, the RuvA-RuvB-RuvC complex processes Holliday junction (HJ) DNA during genetic recombination and DNA repair, while the RuvA-RuvB complex plays an important role in the rescue of blocked DNA replication forks via replication fork reversal (RFR). RuvA specifically binds to HJ cruciform DNA, conferring on it an open structure. The RuvB hexamer acts as an ATP-dependent pump, pulling dsDNA into and through the RuvAB complex. HJ branch migration allows RuvC to scan DNA until it finds its consensus sequence, where it cleaves and resolves the cruciform DNA. The sequence is that of Holliday junction branch migration complex subunit RuvA from Streptococcus mutans serotype c (strain ATCC 700610 / UA159).